A 320-amino-acid chain; its full sequence is Cytochrome f (320 aa).

An N-terminal signal peptide occupies residues 1-35 (MQTRNTFSWIREEITRSISVSLMIYIITWASISSA). Positions 36, 56, 59, and 60 each coordinate heme. Residues 286–305 (VQGLLFFLGSVVLAQIFLVL) form a helical membrane-spanning segment.

The protein belongs to the cytochrome f family. The 4 large subunits of the cytochrome b6-f complex are cytochrome b6, subunit IV (17 kDa polypeptide, petD), cytochrome f and the Rieske protein, while the 4 small subunits are PetG, PetL, PetM and PetN. The complex functions as a dimer. Requires heme as cofactor. In terms of processing, purified from leaves as a water-soluble monomeric protein with a mass of 28.16 kDa, cleavage occurs after Gln-287 and separates the heme-binding from the membrane.

The protein localises to the plastid. It is found in the chloroplast thylakoid membrane. In terms of biological role, component of the cytochrome b6-f complex, which mediates electron transfer between photosystem II (PSII) and photosystem I (PSI), cyclic electron flow around PSI, and state transitions. The protein is Cytochrome f (petA) of Brassica rapa subsp. rapa (Turnip).